We begin with the raw amino-acid sequence, 449 residues long: KASVGFKAGVKDYRLTYYTPDYETKDTDILAAFRVTPQPGVPAEEAGAAVAAESSTGTWTTVWTDGLTSLDRYKGRCYHIEAVIGEENQYICYVAYPLDLFEEGSVTNMFTSIVGNVFGFKALRALRLEDLRIPPAYSKTFQGPPHGIQVERDKLNKYGRPLLGCTIKPKLGLSAKNYGRAVYECLRGGLDFTKDDENVNSQPFMRWRDRFVFCAEALYKAQAETGEIKGHYLNATAGTCEEMMKRAVFARELGAPIVMHDYLTGGFTANTSLAHYCRDNGLLLHIHRAMHAVIDRQKNHGMHFRVLAKGLRMSGGDHIHAGTVVGKLEGEREITLGFVDLLRDDFIEKDRSRGIFFTQDWVSMPGVIPVASGGIHVWHMPALTEIFGDDSVLQFGGGTLGHPWGNAPGAVANRVALEACVQARNEGRDLAREGNEIIREAAKWSPELA.

Lys-7 is modified (N6,N6,N6-trimethyllysine). Substrate contacts are provided by Asn-116 and Thr-166. Residue Lys-168 is the Proton acceptor of the active site. Lys-170 provides a ligand contact to substrate. Positions 194, 196, and 197 each coordinate Mg(2+). The residue at position 194 (Lys-194) is an N6-carboxylysine. Catalysis depends on His-287, which acts as the Proton acceptor. Residues Arg-288, His-320, and Ser-372 each coordinate substrate.

This sequence belongs to the RuBisCO large chain family. Type I subfamily. As to quaternary structure, heterohexadecamer of 8 large chains and 8 small chains; disulfide-linked. The disulfide link is formed within the large subunit homodimers. The cofactor is Mg(2+). Post-translationally, the disulfide bond which can form in the large chain dimeric partners within the hexadecamer appears to be associated with oxidative stress and protein turnover.

The protein resides in the plastid. The protein localises to the chloroplast. The enzyme catalyses 2 (2R)-3-phosphoglycerate + 2 H(+) = D-ribulose 1,5-bisphosphate + CO2 + H2O. It catalyses the reaction D-ribulose 1,5-bisphosphate + O2 = 2-phosphoglycolate + (2R)-3-phosphoglycerate + 2 H(+). Functionally, ruBisCO catalyzes two reactions: the carboxylation of D-ribulose 1,5-bisphosphate, the primary event in carbon dioxide fixation, as well as the oxidative fragmentation of the pentose substrate in the photorespiration process. Both reactions occur simultaneously and in competition at the same active site. The protein is Ribulose bisphosphate carboxylase large chain of Liriope muscari (Big blue lilyturf).